Consider the following 361-residue polypeptide: Polyribonucleotide 5'-hydroxyl-kinase MJ1315 (361 aa).

39–46 (GGVDSGKT) provides a ligand contact to ATP.

A divalent metal cation serves as cofactor.

It catalyses the reaction a 5'-end dephospho-2'-deoxyribonucleoside-DNA + ATP = a 5'-end 5'-phospho-2'-deoxyribonucleoside-DNA + ADP + H(+). It carries out the reaction a 5'-end dephospho-ribonucleoside-RNA + ATP = a 5'-end 5'-phospho-ribonucleoside-RNA + ADP + H(+). Its function is as follows. Polynucleotide kinase that can phosphorylate the 5'-hydroxyl groups of both single-stranded RNA (ssRNA) and single-stranded DNA (ssDNA). Exhibits a strong preference for ssRNA. The chain is Polyribonucleotide 5'-hydroxyl-kinase MJ1315 from Methanocaldococcus jannaschii (strain ATCC 43067 / DSM 2661 / JAL-1 / JCM 10045 / NBRC 100440) (Methanococcus jannaschii).